Reading from the N-terminus, the 252-residue chain is Thiazole synthase (252 aa).

The active-site Schiff-base intermediate with DXP is K98. 1-deoxy-D-xylulose 5-phosphate-binding positions include G159, 185–186 (AG), and 207–208 (AT).

Belongs to the ThiG family. As to quaternary structure, homotetramer. Forms heterodimers with either ThiH or ThiS.

It localises to the cytoplasm. It catalyses the reaction [ThiS sulfur-carrier protein]-C-terminal-Gly-aminoethanethioate + 2-iminoacetate + 1-deoxy-D-xylulose 5-phosphate = [ThiS sulfur-carrier protein]-C-terminal Gly-Gly + 2-[(2R,5Z)-2-carboxy-4-methylthiazol-5(2H)-ylidene]ethyl phosphate + 2 H2O + H(+). The protein operates within cofactor biosynthesis; thiamine diphosphate biosynthesis. Functionally, catalyzes the rearrangement of 1-deoxy-D-xylulose 5-phosphate (DXP) to produce the thiazole phosphate moiety of thiamine. Sulfur is provided by the thiocarboxylate moiety of the carrier protein ThiS. In vitro, sulfur can be provided by H(2)S. In Mycobacterium avium (strain 104), this protein is Thiazole synthase.